A 617-amino-acid polypeptide reads, in one-letter code: MDFSKLPKIRDEDKESTFGYVHGVSGPVVTACDMAGAAMYELVRVGHSELVGEIIRLEGDMATIQVYEETSGVSVGDPVLRTGKPLSVELGPGIMGAIFDGIQRPLSDISSQTQSIYIPRGVNVSALSRDVKWDFTPCKNLRVGSHITGGDIYGIVNENSLIKHKIMLPPRNRGTVTYIAPPGNYDTSDVVLELEFEGIKEKFSMVQVWPVRQVRPVTEKLPANHPLLTGQRVLDALFPCVQGGTTAIPGAFGCGKTVISQSLSKYSNSDVIIYVGCGERGNEMSEVLRDFPELTMEVDGKVESIMKRTALVANTSNMPVAAREASIYTGITLSEYFRDMGYHVSMMADSTSRWAEALREISGRLAEMPADSGYPAYLGARLASFYERAGRVKCLGNPEREGSVSIVGAVSPPGGDFSDPVTSATLGIVQVFWGLDKKLAQRKHFPSVNWLISYSKYMRALDEYYDKHFTEFVPLRTKAKEILQEEEDLAEIVQLVGKASLAETDKITLEVAKLIKDDFLQQNGYTPYDRFCPFYKTVGMLSNMIAFYDMARRAVETTAQSDNKITWSIIREHMGEILYKLSSMKFKDPVKDGEAKIKADYAQLLEDMQNAFRSLED.

Phosphothreonine is present on T136. 250–257 provides a ligand contact to ATP; the sequence is GAFGCGKT. Phosphoserine; by AMPK is present on S384.

The protein belongs to the ATPase alpha/beta chains family. V-ATPase is a heteromultimeric enzyme made up of two complexes: the ATP-hydrolytic V1 complex and the proton translocation V0 complex. The V1 complex consists of three catalytic AB heterodimers that form a heterohexamer, three peripheral stalks each consisting of EG heterodimers, one central rotor including subunits D and F, and the regulatory subunits C and H. The proton translocation complex V0 consists of the proton transport subunit a, a ring of proteolipid subunits c9c'', rotary subunit d, subunits e and f, and the accessory subunits ATP6AP1/Ac45 and ATP6AP2/PRR. Interacts with the V0 complex V-ATPase subunit a4 ATP6V0A4. Interacts with WFS1. Interacts with alpha-crystallin B chain/CRYAB and with MTOR, forming a ternary complex. Post-translationally, phosphorylation at Ser-384 by AMPK down-regulates its enzyme activity. As to expression, expressed in brain (at protein level).

It localises to the cytoplasm. Its subcellular location is the cytosol. It is found in the cytoplasmic vesicle. The protein resides in the secretory vesicle. The protein localises to the clathrin-coated vesicle membrane. It localises to the lysosome. It catalyses the reaction ATP + H2O + 4 H(+)(in) = ADP + phosphate + 5 H(+)(out). Its activity is regulated as follows. ATP hydrolysis occurs at the interface between the nucleotide-binding domains of subunits A and B. ATP hydrolysis triggers a conformational change in the subunits D and F, which induces a shift of subunit d. The c-ring is subsequently rotated and results in a continuous proton translocation across the membrane. The V-ATPase is inhibited by bafilomycin A. In terms of biological role, catalytic subunit of the V1 complex of vacuolar(H+)-ATPase (V-ATPase), a multisubunit enzyme composed of a peripheral complex (V1) that hydrolyzes ATP and a membrane integral complex (V0) that translocates protons. V-ATPase is responsible for acidifying and maintaining the pH of intracellular compartments and in some cell types, is targeted to the plasma membrane, where it is responsible for acidifying the extracellular environment. In aerobic conditions, involved in intracellular iron homeostasis, thus triggering the activity of Fe(2+) prolyl hydroxylase (PHD) enzymes, and leading to HIF1A hydroxylation and subsequent proteasomal degradation. May play a role in neurite development and synaptic connectivity. The polypeptide is V-type proton ATPase catalytic subunit A (ATP6V1A) (Bos taurus (Bovine)).